We begin with the raw amino-acid sequence, 534 residues long: Serine/threonine-protein kinase Nek6 (534 aa).

In terms of domain architecture, Protein kinase spans 4-257 (YEVVEQIGRG…AGELLRHPYL (254 aa)). ATP contacts are provided by residues 10–18 (IGRGAYGSA) and lysine 33. Aspartate 129 functions as the Proton acceptor in the catalytic mechanism. Disordered stretches follow at residues 278–306 (KSNL…SSEA) and 425–449 (KAHT…SSPK).

It belongs to the protein kinase superfamily. NEK Ser/Thr protein kinase family. NIMA subfamily. Interacts with DIS1. Ubiquitinated by the E3 ligase DIS1. Ubiquitination of NEK6 leads to its degradation via the 26S proteasome-dependent pathway. As to expression, expressed in anthers, pistils and leaves.

The protein resides in the cytoplasm. The enzyme catalyses L-seryl-[protein] + ATP = O-phospho-L-seryl-[protein] + ADP + H(+). It catalyses the reaction L-threonyl-[protein] + ATP = O-phospho-L-threonyl-[protein] + ADP + H(+). Its function is as follows. May be involved in plant development processes. This is Serine/threonine-protein kinase Nek6 from Oryza sativa subsp. japonica (Rice).